Consider the following 148-residue polypeptide: 3-hydroxyacyl-[acyl-carrier-protein] dehydratase FabZ (148 aa).

The active site involves His49.

This sequence belongs to the thioester dehydratase family. FabZ subfamily.

The protein resides in the cytoplasm. The catalysed reaction is a (3R)-hydroxyacyl-[ACP] = a (2E)-enoyl-[ACP] + H2O. Involved in unsaturated fatty acids biosynthesis. Catalyzes the dehydration of short chain beta-hydroxyacyl-ACPs and long chain saturated and unsaturated beta-hydroxyacyl-ACPs. This chain is 3-hydroxyacyl-[acyl-carrier-protein] dehydratase FabZ, found in Ehrlichia canis (strain Jake).